A 226-amino-acid polypeptide reads, in one-letter code: MYSIKCDDNKAMPRERLMRLGAESLSNQELLAILLRTGNKEKHVLELSSYLLSHLDSLADFKKMSLQELQHLAGIGKVKAIEIKAMIELVSRILATDKTLTDSVLTSVQVAEKMMAALGDKKQEHLVVLYLDNQNRIIEEKTIFIGTVRRSLAEPREILYYACKNMATSLIVIHNHPSGNIEPSSNDYCFTEKIKRSCEDLGIICLDHIIVSYKDYYSFREKSTLF.

Positions 103–225 constitute an MPN domain; the sequence is SVLTSVQVAE…YYSFREKSTL (123 aa). His174, His176, and Asp187 together coordinate Zn(2+). A JAMM motif motif is present at residues 174–187; sequence HNHPSGNIEPSSND.

The protein belongs to the UPF0758 family.

The sequence is that of UPF0758 protein Spy49_0870 from Streptococcus pyogenes serotype M49 (strain NZ131).